The following is a 97-amino-acid chain: Co-chaperonin GroES (97 aa).

Belongs to the GroES chaperonin family. In terms of assembly, heptamer of 7 subunits arranged in a ring. Interacts with the chaperonin GroEL.

It is found in the cytoplasm. Together with the chaperonin GroEL, plays an essential role in assisting protein folding. The GroEL-GroES system forms a nano-cage that allows encapsulation of the non-native substrate proteins and provides a physical environment optimized to promote and accelerate protein folding. GroES binds to the apical surface of the GroEL ring, thereby capping the opening of the GroEL channel. In Buchnera aphidicola subsp. Baizongia pistaciae (strain Bp), this protein is Co-chaperonin GroES.